The chain runs to 142 residues: Hemoglobin subunit alpha (142 aa).

At serine 1 the chain carries N-acetylserine. Residues serine 1–arginine 142 enclose the Globin domain. An O2-binding site is contributed by histidine 58. Heme b is bound at residue histidine 88.

The protein belongs to the globin family. Heterotetramer of two alpha chains and two beta chains. In terms of tissue distribution, red blood cells.

Its function is as follows. Involved in oxygen transport from gills to the various peripheral tissues. This Catostomus clarkii (Desert sucker) protein is Hemoglobin subunit alpha (hba).